The sequence spans 231 residues: Ribose-5-phosphate isomerase A (231 aa).

Substrate is bound by residues 28-31 (TGST), 83-86 (DGAD), and 96-99 (KGGG). Glu-105 serves as the catalytic Proton acceptor. Lys-123 provides a ligand contact to substrate.

The protein belongs to the ribose 5-phosphate isomerase family. As to quaternary structure, homodimer.

It carries out the reaction aldehydo-D-ribose 5-phosphate = D-ribulose 5-phosphate. The protein operates within carbohydrate degradation; pentose phosphate pathway; D-ribose 5-phosphate from D-ribulose 5-phosphate (non-oxidative stage): step 1/1. Catalyzes the reversible conversion of ribose-5-phosphate to ribulose 5-phosphate. The polypeptide is Ribose-5-phosphate isomerase A (Sinorhizobium medicae (strain WSM419) (Ensifer medicae)).